The primary structure comprises 696 residues: Polyribonucleotide nucleotidyltransferase (696 aa).

Aspartate 483 and aspartate 489 together coordinate Mg(2+). In terms of domain architecture, KH spans 550-609 (PRITTIWVKVDKIRDVIGSGGKNIRSVTEATGVSIDIDDTGKINIASTNKEACDLAIKMI). In terms of domain architecture, S1 motif spans 619-687 (GKLYMGTVKK…KQGKIKLSRK (69 aa)).

It belongs to the polyribonucleotide nucleotidyltransferase family. The cofactor is Mg(2+).

It is found in the cytoplasm. The enzyme catalyses RNA(n+1) + phosphate = RNA(n) + a ribonucleoside 5'-diphosphate. Functionally, involved in mRNA degradation. Catalyzes the phosphorolysis of single-stranded polyribonucleotides processively in the 3'- to 5'-direction. This is Polyribonucleotide nucleotidyltransferase from Geobacter sp. (strain M21).